Here is a 308-residue protein sequence, read N- to C-terminus: Olfactory receptor 2T6 (308 aa).

Residues 1–28 (MNENNETLTRGFTLMGLFTHNKCSGFFF) lie on the Extracellular side of the membrane. Asn5 carries N-linked (GlcNAc...) asparagine glycosylation. Residues 29–49 (GVICAVFFMAMIANGVMIFLI) form a helical membrane-spanning segment. Residues 50 to 57 (NIDPHLHT) are Cytoplasmic-facing. A helical membrane pass occupies residues 58–78 (PMYFLLSHLSVIDTLYISTIV). At 79–98 (PKMLVDYLMGEGTISFIACT) the chain is on the extracellular side. Residues Cys97 and Cys179 are joined by a disulfide bond. Residues 99–119 (AQCFLYMGFMGAEFFLLGLMA) form a helical membrane-spanning segment. Residues 120 to 145 (YDRYVAICNPLRYPVLISWRVCWMIL) lie on the Cytoplasmic side of the membrane. The helical transmembrane segment at 146 to 166 (ASSWFGGALDSFLLTPITMSL) threads the bilayer. Residues 167–203 (PFCASHQINHFFCEAPTMLRLACGDKTTYETVMYVCC) are Extracellular-facing. Residues 204–224 (VAMLLIPFSVVTASYTRILIT) traverse the membrane as a helical segment. Topologically, residues 225-236 (VHQMTSAEGRKK) are cytoplasmic. A helical transmembrane segment spans residues 237 to 257 (AFATCSSHMMVVTLFYGAALY). Topologically, residues 258 to 271 (TYTLPQSYHTPIKD) are extracellular. Residues 272-292 (KVFSAFYTILTPLLNPLIYSL) traverse the membrane as a helical segment. The Cytoplasmic segment spans residues 293-308 (RNRDVMGALKRVVARC).

It belongs to the G-protein coupled receptor 1 family.

Its subcellular location is the cell membrane. Odorant receptor. This Homo sapiens (Human) protein is Olfactory receptor 2T6 (OR2T6).